The following is a 360-amino-acid chain: Membrane-bound lytic murein transglycosylase C (360 aa).

An N-terminal signal peptide occupies residues 1 to 16; sequence MKKLLALAVIAPLLIS. Cysteine 17 carries the N-palmitoyl cysteine lipid modification. Cysteine 17 carries S-diacylglycerol cysteine lipidation.

Belongs to the transglycosylase Slt family.

The protein resides in the cell outer membrane. The catalysed reaction is Exolytic cleavage of the (1-&gt;4)-beta-glycosidic linkage between N-acetylmuramic acid (MurNAc) and N-acetylglucosamine (GlcNAc) residues in peptidoglycan, from either the reducing or the non-reducing ends of the peptidoglycan chains, with concomitant formation of a 1,6-anhydrobond in the MurNAc residue.. Functionally, murein-degrading enzyme. May play a role in recycling of muropeptides during cell elongation and/or cell division. This is Membrane-bound lytic murein transglycosylase C from Salmonella arizonae (strain ATCC BAA-731 / CDC346-86 / RSK2980).